Consider the following 318-residue polypeptide: Acetyl-coenzyme A carboxylase carboxyl transferase subunit alpha (318 aa).

The 262-residue stretch at 32–293 (NLSDELERLR…KERLVSQLDR (262 aa)) folds into the CoA carboxyltransferase C-terminal domain.

Belongs to the AccA family. As to quaternary structure, acetyl-CoA carboxylase is a heterohexamer composed of biotin carboxyl carrier protein (AccB), biotin carboxylase (AccC) and two subunits each of ACCase subunit alpha (AccA) and ACCase subunit beta (AccD).

It is found in the cytoplasm. The catalysed reaction is N(6)-carboxybiotinyl-L-lysyl-[protein] + acetyl-CoA = N(6)-biotinyl-L-lysyl-[protein] + malonyl-CoA. It participates in lipid metabolism; malonyl-CoA biosynthesis; malonyl-CoA from acetyl-CoA: step 1/1. Component of the acetyl coenzyme A carboxylase (ACC) complex. First, biotin carboxylase catalyzes the carboxylation of biotin on its carrier protein (BCCP) and then the CO(2) group is transferred by the carboxyltransferase to acetyl-CoA to form malonyl-CoA. In Saccharophagus degradans (strain 2-40 / ATCC 43961 / DSM 17024), this protein is Acetyl-coenzyme A carboxylase carboxyl transferase subunit alpha.